A 532-amino-acid chain; its full sequence is uncharacterized protein (532 aa).

Disordered regions lie at residues 26 to 84 (KALR…TDSE), 97 to 129 (VFDE…QVGR), and 157 to 470 (SKAA…HTCQ). The span at 30-40 (GNNNGSSTSGG) shows a compositional bias: low complexity. Residues 67-80 (DIISQARRQVSLSR) are compositionally biased toward polar residues. Over residues 157-181 (SKAAGEESKRHAHFESIQEEEKISE) the composition is skewed to basic and acidic residues. Residues 198 to 213 (IQSGSESSDSDSIIFD) are compositionally biased toward low complexity. Over residues 237 to 249 (VEKKIEKPAVKEQ) the composition is skewed to basic and acidic residues. Low complexity-rich tracts occupy residues 259–290 (PTPT…SASE), 298–315 (ESQV…SSSK), and 326–335 (SSSSSASTIS). Positions 347 to 356 (KTKKPDKKRA) are enriched in basic residues. Composition is skewed to basic and acidic residues over residues 357–368 (KPDDIRQNKKPE), 389–403 (STVR…ESLK), 410–419 (KSSEKMEKPR), and 437–448 (RDAEREQDIERR). Positions 449–461 (REKRARRFRSRRR) are enriched in basic residues.

This is an uncharacterized protein from Caenorhabditis elegans.